The sequence spans 217 residues: Somatotropin (217 aa).

A signal peptide spans 1-27 (MMAAGPRTSLLLAFTLLCLPWTQVVGA). Zn(2+) is bound at residue H46. A disulfide bridge links C79 with C190. S132 is subject to Phosphoserine. A Zn(2+)-binding site is contributed by E199. C207 and C215 are joined by a disulfide.

It belongs to the somatotropin/prolactin family.

It is found in the secreted. Its function is as follows. Plays an important role in growth control. Its major role in stimulating body growth is to stimulate the liver and other tissues to secrete IGF1. It stimulates both the differentiation and proliferation of myoblasts. It also stimulates amino acid uptake and protein synthesis in muscle and other tissues. This Capra hircus (Goat) protein is Somatotropin (GH1).